Reading from the N-terminus, the 536-residue chain is CTP synthase (536 aa).

Residues 1–266 (MKTKFIFVTG…DEQVVEKLNI (266 aa)) form an amidoligase domain region. CTP is bound at residue Ser-14. A UTP-binding site is contributed by Ser-14. ATP contacts are provided by residues 15–20 (SIGKGL) and Asp-72. Mg(2+) contacts are provided by Asp-72 and Glu-140. CTP-binding positions include 147–149 (DIE), 187–192 (KTKPTQ), and Lys-223. Residues 187 to 192 (KTKPTQ) and Lys-223 each bind UTP. Residues 292–534 (RIAIVGKYVN…IAAALDRKDK (243 aa)) form the Glutamine amidotransferase type-1 domain. L-glutamine is bound at residue Gly-354. Cys-381 functions as the Nucleophile; for glutamine hydrolysis in the catalytic mechanism. L-glutamine is bound by residues 382–385 (LGMQ), Glu-405, and Arg-462. Active-site residues include His-507 and Glu-509.

The protein belongs to the CTP synthase family. As to quaternary structure, homotetramer.

The enzyme catalyses UTP + L-glutamine + ATP + H2O = CTP + L-glutamate + ADP + phosphate + 2 H(+). It catalyses the reaction L-glutamine + H2O = L-glutamate + NH4(+). It carries out the reaction UTP + NH4(+) + ATP = CTP + ADP + phosphate + 2 H(+). The protein operates within pyrimidine metabolism; CTP biosynthesis via de novo pathway; CTP from UDP: step 2/2. Allosterically activated by GTP, when glutamine is the substrate; GTP has no effect on the reaction when ammonia is the substrate. The allosteric effector GTP functions by stabilizing the protein conformation that binds the tetrahedral intermediate(s) formed during glutamine hydrolysis. Inhibited by the product CTP, via allosteric rather than competitive inhibition. Functionally, catalyzes the ATP-dependent amination of UTP to CTP with either L-glutamine or ammonia as the source of nitrogen. Regulates intracellular CTP levels through interactions with the four ribonucleotide triphosphates. The polypeptide is CTP synthase (Geobacter sulfurreducens (strain ATCC 51573 / DSM 12127 / PCA)).